We begin with the raw amino-acid sequence, 81 residues long: Small cysteine-rich protein 6 (81 aa).

Residues M1–S23 form the signal peptide. Residues G24–N25 constitute a propeptide that is removed on maturation.

This sequence belongs to the Cnidaria small cysteine-rich protein (SCRiP) family. beta subfamily. Contains 4 disulfide bonds.

It localises to the secreted. It is found in the nematocyst. Induces neurotoxic symptoms on zebrafish. Has also been claimed to be implied in calcification, but tests on homolog proteins suggest that proteins of this family have a neurotoxic function and not a calcification function. The chain is Small cysteine-rich protein 6 from Orbicella faveolata (Mountainous star coral).